Reading from the N-terminus, the 379-residue chain is Probable purine permease 11 (379 aa).

10 consecutive transmembrane segments (helical) span residues 43–63 (WVLV…SVLL), 76–96 (WMAT…LLLL), 114–134 (IVLI…LYSV), 144–164 (YSLI…FINA), 167–187 (FTAL…LIAL), 203–223 (IVGF…LSLM), 239–259 (VLEM…IGLF), 294–313 (VCSV…FSNV), 314–330 (ISTL…LVVF), and 334–354 (MSGV…SYVY).

The protein belongs to the purine permeases (TC 2.A.7.14) family. May form a complex with the potassium channel subunit KAT1.

It localises to the membrane. This chain is Probable purine permease 11 (PUP11), found in Arabidopsis thaliana (Mouse-ear cress).